Here is a 193-residue protein sequence, read N- to C-terminus: MSVIPMVVEQTSRGERSYDIYSRLLKERVIFLSGEVEDRMANLIVAQLLFLESEDPTKDINIYINSPGGSVTAGMAIYDTMQFIKPDIRTLCIGQACSMGAFLLAGGTAGKRAALPNARVMIHQPLGGFRGQASDIQIHAQEILKIKHTLNDRLAFHTGQGIERIEKDTDRDNFMSAEEAQAYGLVDEVLVKR.

S98 acts as the Nucleophile in catalysis. Residue H123 is part of the active site.

Belongs to the peptidase S14 family. In terms of assembly, fourteen ClpP subunits assemble into 2 heptameric rings which stack back to back to give a disk-like structure with a central cavity, resembling the structure of eukaryotic proteasomes.

It localises to the cytoplasm. It catalyses the reaction Hydrolysis of proteins to small peptides in the presence of ATP and magnesium. alpha-casein is the usual test substrate. In the absence of ATP, only oligopeptides shorter than five residues are hydrolyzed (such as succinyl-Leu-Tyr-|-NHMec, and Leu-Tyr-Leu-|-Tyr-Trp, in which cleavage of the -Tyr-|-Leu- and -Tyr-|-Trp bonds also occurs).. Cleaves peptides in various proteins in a process that requires ATP hydrolysis. Has a chymotrypsin-like activity. Plays a major role in the degradation of misfolded proteins. The protein is ATP-dependent Clp protease proteolytic subunit of Haemophilus influenzae (strain 86-028NP).